The sequence spans 288 residues: Nucleotide-binding protein AHA_3920 (288 aa).

8–15 (GRSGSGKT) contributes to the ATP binding site. 56 to 59 (DVRN) provides a ligand contact to GTP.

This sequence belongs to the RapZ-like family.

Its function is as follows. Displays ATPase and GTPase activities. The polypeptide is Nucleotide-binding protein AHA_3920 (Aeromonas hydrophila subsp. hydrophila (strain ATCC 7966 / DSM 30187 / BCRC 13018 / CCUG 14551 / JCM 1027 / KCTC 2358 / NCIMB 9240 / NCTC 8049)).